The chain runs to 92 residues: DNA-directed RNA polymerase subunit omega (92 aa).

This sequence belongs to the RNA polymerase subunit omega family. In terms of assembly, the RNAP catalytic core consists of 2 alpha, 1 beta, 1 beta' and 1 omega subunit. When a sigma factor is associated with the core the holoenzyme is formed, which can initiate transcription.

It catalyses the reaction RNA(n) + a ribonucleoside 5'-triphosphate = RNA(n+1) + diphosphate. In terms of biological role, promotes RNA polymerase assembly. Latches the N- and C-terminal regions of the beta' subunit thereby facilitating its interaction with the beta and alpha subunits. The chain is DNA-directed RNA polymerase subunit omega from Shewanella baltica (strain OS223).